A 682-amino-acid chain; its full sequence is MTTQPRKILVTCALPYANGAIHLGHMLEHIQADIWVRFQRMRGNKIHFVCADDAHGTPIMLNADKLGITPEELIAKAKADHIRDFAGFNISFDNYHSTHSEENKQLTAEIYNKLKANGFIKSKVISQLFDPEKNMFLPDRFVKGTCPKCKAEDQYGDNCEVCASTYSPMDLINPRSAVSGTTPIVKESEHFFFDLPAFEGMLKEWTRSGSLQSEIANKMQEWFESGLQQWDISRDAPYFGFEIPGAKDKFFYVWLDAPIGYMASFKNLCEREGIDFNEFWAEGSDAELYHFIGKDIVYFHSLFWPAMLEGSGYRKPTNVFAHGYVTVDGAKMSKSRGTFIQASTYLNHIDPECLRYYYAAKLNDRIEDLDFNLEDFVQRVNTDIVNKLVNLASRNAGFIAKRFEGKLSDKLEDEALFAEFTAQAEQIAAYYESREYNKAIREIMALTDKANKYIDEKAPWVIAKEEGKEAELQAVCSMGIELFRVLMSYLKPVLPKLAERAEAFLQAELRWDNIHQPLLGHTLAPFKALFSRLEKKQIDAVVEETKALFAAANKAAEKTEAKPTALSAVKPIAETITIDDLAKLDMRVAKVLKCEAVPESNKLLRFELDLGDHTRQVFSGIKAAYNKPEELEGRFVIMVANLAPRQMKFGVSEGMILSAGTGGSDLFLLSADNGVTAGMQVK.

A 'HIGH' region motif is present at residues 15 to 25; it reads PYANGAIHLGH. Zn(2+) is bound by residues cysteine 146, cysteine 149, cysteine 159, and cysteine 162. A 'KMSKS' region motif is present at residues 331–335; the sequence is KMSKS. An ATP-binding site is contributed by lysine 334. Positions 580 to 682 constitute a tRNA-binding domain; the sequence is DLAKLDMRVA…NGVTAGMQVK (103 aa).

Belongs to the class-I aminoacyl-tRNA synthetase family. MetG type 1 subfamily. Homodimer. It depends on Zn(2+) as a cofactor.

The protein resides in the cytoplasm. It catalyses the reaction tRNA(Met) + L-methionine + ATP = L-methionyl-tRNA(Met) + AMP + diphosphate. In terms of biological role, is required not only for elongation of protein synthesis but also for the initiation of all mRNA translation through initiator tRNA(fMet) aminoacylation. The chain is Methionine--tRNA ligase from Haemophilus influenzae (strain 86-028NP).